We begin with the raw amino-acid sequence, 360 residues long: Glutamate 5-kinase (360 aa).

K11 contacts ATP. Residues S51, D138, and N150 each contribute to the substrate site. Residues 278 to 356 enclose the PUA domain; the sequence is KGEIHINECA…GKKPVVHYDY (79 aa).

This sequence belongs to the glutamate 5-kinase family.

The protein localises to the cytoplasm. It carries out the reaction L-glutamate + ATP = L-glutamyl 5-phosphate + ADP. It participates in amino-acid biosynthesis; L-proline biosynthesis; L-glutamate 5-semialdehyde from L-glutamate: step 1/2. In terms of biological role, catalyzes the transfer of a phosphate group to glutamate to form L-glutamate 5-phosphate. The polypeptide is Glutamate 5-kinase (Bacteroides thetaiotaomicron (strain ATCC 29148 / DSM 2079 / JCM 5827 / CCUG 10774 / NCTC 10582 / VPI-5482 / E50)).